Reading from the N-terminus, the 460-residue chain is tRNA(Ile)-lysidine synthase (460 aa).

30–35 (SGGLDS) is a binding site for ATP.

It belongs to the tRNA(Ile)-lysidine synthase family.

Its subcellular location is the cytoplasm. The enzyme catalyses cytidine(34) in tRNA(Ile2) + L-lysine + ATP = lysidine(34) in tRNA(Ile2) + AMP + diphosphate + H(+). In terms of biological role, ligates lysine onto the cytidine present at position 34 of the AUA codon-specific tRNA(Ile) that contains the anticodon CAU, in an ATP-dependent manner. Cytidine is converted to lysidine, thus changing the amino acid specificity of the tRNA from methionine to isoleucine. The protein is tRNA(Ile)-lysidine synthase of Yersinia pestis.